Here is a 238-residue protein sequence, read N- to C-terminus: Endo-chitosanase (238 aa).

An N-terminal signal peptide occupies residues 1–17 (MRLSEILTVALVTGATA). N83 is a glycosylation site (N-linked (GlcNAc...) asparagine).

Belongs to the glycosyl hydrolase 75 family.

Its subcellular location is the secreted. The catalysed reaction is Endohydrolysis of beta-(1-&gt;4)-linkages between D-glucosamine residues in a partly acetylated chitosan.. Functionally, chitosanase catalyzing the endo-type cleavage of chitosan, the deacylated form of chitin. Chitosanase may be crucial in the degradation of the deacetylated portion of chitin in the fungal cell wall. Chitoolisaccharides produced by the hydrolysis of partially N-acetylated chitosan are known to have many biological activities, including antibacterial activity, immune-enhancing effects, and elicitor activity. The chitosans with higher degrees of deacetylation were shown to be the better substrates. Chitodimer, chitotrimer, and chitotetramer are the major products but monoacetyl chitodimer, monoacetyl chitotrimer, and monoacetyl chitotetramer are also produced. This chain is Endo-chitosanase (csn), found in Aspergillus fumigatus (Neosartorya fumigata).